We begin with the raw amino-acid sequence, 417 residues long: Zinc finger protein CONSTANS-LIKE 16 (417 aa).

Positions 17, 20, 40, and 45 each coordinate Zn(2+). The B box-type; atypical zinc finger occupies 17–59 (CDSCVKRRARWYCAADDAFLCQSCDSLVHSANPLARRHERVRL). The disordered stretch occupies residues 63–105 (SPAVVKHSNHSSASPPHEVATWHHGFTRKARTPRGSGKKNNSS). Positions 212–239 (LSNSEMFKIEKDEIEEEVEEIKAMSMDI) form a coiled coil. Residues 361 to 403 (REARVSRYREKRRTRLFSKKIRYEVRKLNAEKRPRMKGRFVKR) form the CCT domain.

It belongs to the CONSTANS family.

It localises to the nucleus. This Arabidopsis thaliana (Mouse-ear cress) protein is Zinc finger protein CONSTANS-LIKE 16 (COL16).